We begin with the raw amino-acid sequence, 455 residues long: Gastric inhibitory polypeptide receptor (455 aa).

The signal sequence occupies residues 1 to 18 (MPLRLLLLLLWLWGLSLQ). Over 19-135 (RAETDSEGQT…DQKLILERLQ (117 aa)) the chain is Extracellular. 3 disulfide bridges follow: Cys-43/Cys-67, Cys-58/Cys-100, and Cys-81/Cys-115. Asn-59, Asn-69, and Asn-74 each carry an N-linked (GlcNAc...) asparagine glycan. A helical membrane pass occupies residues 136–158 (VVYTVGYSLSLATLLLALLILSL). The Cytoplasmic segment spans residues 159–166 (FRRLHCTR). Residues 167 to 186 (NYIHMNLFTSFMLRAGAILT) traverse the membrane as a helical segment. Residues 187-214 (RDQLLPPLGPYTGNQTPTLWNQALAACR) are Extracellular-facing. The chain crosses the membrane as a helical span at residues 215–239 (TAQILTQYCVGANYTWLLVEGVYLH). Over 240–251 (HLLVVVRRSEKG) the chain is Cytoplasmic. The chain crosses the membrane as a helical span at residues 252–275 (HFRCYLLLGWGAPALFVIPWVIVR). Over 276-290 (YLYENTQCWERNEVK) the chain is Extracellular. Residues 291–316 (AIWWIIRTPILITILINFLIFIRILG) form a helical membrane-spanning segment. Topologically, residues 317–338 (ILVSKLRTRQMRCPDYRLRLAR) are cytoplasmic. The chain crosses the membrane as a helical span at residues 339 to 359 (STLTLMPLLGVHEVVFAPVTE). Topologically, residues 360 to 374 (EQAEGSLRFAKLAFE) are extracellular. A helical transmembrane segment spans residues 375–395 (IFLSSFQGFLVSVLYCFINKE). Residues 396–455 (VQSEIRRLRLSLQEQCPRPHLGQAPRAVPLSSAPQEAAIRNALPSGMLHVPGDEVLESYC) lie on the Cytoplasmic side of the membrane.

It belongs to the G-protein coupled receptor 2 family. In terms of assembly, may form homodimers and heterodimers with GLP1R. Post-translationally, N-glycosylation is required for cell surface expression and lengthens receptor half-life by preventing degradation in the ER. Present in the pancreas as well as the gut, adipose tissue, heart, pituitary, and inner layers of the adrenal cortex, whereas it is not found in kidney, spleen, or liver. It is also expressed in several brain regions, including the cerebral cortex, hippocampus, and olfactory bulb.

It localises to the cell membrane. This is a receptor for GIP. The activity of this receptor is mediated by G proteins which activate adenylyl cyclase. The sequence is that of Gastric inhibitory polypeptide receptor (Gipr) from Rattus norvegicus (Rat).